Consider the following 418-residue polypeptide: Serine hydroxymethyltransferase (418 aa).

Residues Leu120 and 124-126 (GHL) contribute to the (6S)-5,6,7,8-tetrahydrofolate site. Lys229 is modified (N6-(pyridoxal phosphate)lysine).

This sequence belongs to the SHMT family. In terms of assembly, homodimer. Pyridoxal 5'-phosphate is required as a cofactor.

It is found in the cytoplasm. The catalysed reaction is (6R)-5,10-methylene-5,6,7,8-tetrahydrofolate + glycine + H2O = (6S)-5,6,7,8-tetrahydrofolate + L-serine. The protein operates within one-carbon metabolism; tetrahydrofolate interconversion. It participates in amino-acid biosynthesis; glycine biosynthesis; glycine from L-serine: step 1/1. Its function is as follows. Catalyzes the reversible interconversion of serine and glycine with tetrahydrofolate (THF) serving as the one-carbon carrier. This reaction serves as the major source of one-carbon groups required for the biosynthesis of purines, thymidylate, methionine, and other important biomolecules. Also exhibits THF-independent aldolase activity toward beta-hydroxyamino acids, producing glycine and aldehydes, via a retro-aldol mechanism. This Myxococcus xanthus (strain DK1622) protein is Serine hydroxymethyltransferase.